Reading from the N-terminus, the 745-residue chain is Meiotic driver SPOK3 (745 aa).

Residues 4-34 (KDRITQLLRELEEAKAREAQERCEKERLQLE) adopt a coiled-coil conformation. Disordered stretches follow at residues 173–222 (ELTQ…DGVG) and 407–487 (LSSA…VDPQ). Over residues 188–197 (TSDRSLERRQ) the composition is skewed to basic and acidic residues. Composition is skewed to polar residues over residues 208–217 (KSKYICSNRQ) and 409–422 (SAPS…SEYT). The required for antidote activity stretch occupies residues 214 to 325 (SNRQPDGVGI…LLLYVDRDDW (112 aa)). Over residues 466–482 (AKRERGPSSGGKDDGRS) the composition is skewed to basic and acidic residues. The tract at residues 491–745 (QYCTQACLLG…SPMATPSHGG (255 aa)) is required for poison activity.

The protein resides in the cytoplasm. Its subcellular location is the nucleus. Promotes unequal transmission of alleles from the parental zygote to progeny spores by acting as poison/antidote system, leading to poisoning of progeny that do not inherit the allele. May possess DNA nuclease activity that leads to spore killing, and a kinase activity that confers resistance to the nuclease activity. In Podospora anserina (Pleurage anserina), this protein is Meiotic driver SPOK3.